Reading from the N-terminus, the 357-residue chain is 4-hydroxy-3-methylbut-2-en-1-yl diphosphate synthase (flavodoxin) (357 aa).

4 residues coordinate [4Fe-4S] cluster: cysteine 264, cysteine 267, cysteine 299, and glutamate 306.

The protein belongs to the IspG family. It depends on [4Fe-4S] cluster as a cofactor.

The enzyme catalyses (2E)-4-hydroxy-3-methylbut-2-enyl diphosphate + oxidized [flavodoxin] + H2O + 2 H(+) = 2-C-methyl-D-erythritol 2,4-cyclic diphosphate + reduced [flavodoxin]. Its pathway is isoprenoid biosynthesis; isopentenyl diphosphate biosynthesis via DXP pathway; isopentenyl diphosphate from 1-deoxy-D-xylulose 5-phosphate: step 5/6. In terms of biological role, converts 2C-methyl-D-erythritol 2,4-cyclodiphosphate (ME-2,4cPP) into 1-hydroxy-2-methyl-2-(E)-butenyl 4-diphosphate. This Campylobacter jejuni (strain RM1221) protein is 4-hydroxy-3-methylbut-2-en-1-yl diphosphate synthase (flavodoxin).